Here is a 207-residue protein sequence, read N- to C-terminus: Probable GTP-binding protein EngB (207 aa).

The 178-residue stretch at 25 to 202 folds into the EngB-type G domain; that stretch reads DVPEIAFVGR…ATLLWQWAHP (178 aa). GTP-binding positions include 33–40, 60–64, 82–85, 152–155, and 181–183; these read GRSNAGKS, GRTQH, DLPG, TKAD, and FSA. Mg(2+) is bound by residues Ser-40 and Thr-62.

Belongs to the TRAFAC class TrmE-Era-EngA-EngB-Septin-like GTPase superfamily. EngB GTPase family. Mg(2+) serves as cofactor.

In terms of biological role, necessary for normal cell division and for the maintenance of normal septation. The chain is Probable GTP-binding protein EngB from Albidiferax ferrireducens (strain ATCC BAA-621 / DSM 15236 / T118) (Rhodoferax ferrireducens).